Reading from the N-terminus, the 768-residue chain is MHAIAGLTGLLAGVSLSYAAPTHENITSDAYFYGQSPAVYPSPEGTGSGAWASAYEKAKAFVANLTPEEKVNLTAGTDADNGCSGNIPAIPRLNFPGLCVSDAGNGLRSTDHVNAWSSGIHTGASWNKDLAQKRGLHMGSEYHKKGVNVLLGPVVGPLGRIAEGGRNWEGFSVDPYHSGLLVYETIRGIQAAGVGTSTKHYIANEQETNRNPESTDGIDVAAVSSNIDDKTMHELYLWPFQDVVRAGSVSIMCSYQRINNSYGCQNSKTLNGLLKTELGFQGYVMTDWGAQHGGIASSNAGLDMVMPSSTLWNSNLTDAIANGTMEASRLDDMATRIIASWYQMNQDAGFPSPGVGMPADVYAPHQAIIGKSSDSRKVLLQSAIEGHVLVKNKNNTLPLKSPEMISVFGYDAKGPDSLGFALEWLSYSPAIQPNHTLIVGGGSGGNSPAYISAPLDALQQQVIEDGSSILWNISAQDPEVDPNTDACLVFINSYATEGYDRAGLVDEGSDELVTNVASKCSNTIVTIHNAGIRLVNNWIDHENVTAVIFAHLPGQDSGRALVELLYGRSNPSGKLPYTVAKSADDYGALLHPKLPEGQYGLFPQDDFSEGVYIDYRAFDKQGIEPQFEFGFGLSYTTFDYSGLNIGQVSDNSTSRYPPSAAIQEGGNPHLWDVILRVSVDITNSGPVAGDEVAQLYVGIPNGPVRQLRGFEKVNIPVGQTVTVEFALGRRDLSTWDVVAQEWLLQSGTYQVYVGRSSRDLPLQGEFTI.

Positions 1–19 (MHAIAGLTGLLAGVSLSYA) are cleaved as a signal peptide. Residues Asn25, Asn72, and Asn259 are each glycosylated (N-linked (GlcNAc...) asparagine). Residue Asp287 is part of the active site. N-linked (GlcNAc...) asparagine glycans are attached at residues Asn315, Asn322, Asn394, Asn434, Asn472, Asn543, and Asn651.

It belongs to the glycosyl hydrolase 3 family.

It localises to the secreted. The catalysed reaction is Hydrolysis of terminal, non-reducing beta-D-glucosyl residues with release of beta-D-glucose.. It participates in glycan metabolism; cellulose degradation. Functionally, beta-glucosidases are one of a number of cellulolytic enzymes involved in the degradation of cellulosic biomass. Catalyzes the last step releasing glucose from the inhibitory cellobiose. The polypeptide is Probable beta-glucosidase M (bglM) (Aspergillus oryzae (strain ATCC 42149 / RIB 40) (Yellow koji mold)).